The sequence spans 186 residues: uncharacterized protein (186 aa).

The N-linked (GlcNAc...) asparagine; by host glycan is linked to Asn34. Transmembrane regions (helical) follow at residues 47–67 (IGMV…ATTF), 114–134 (ILET…IVLL), and 144–164 (LEMI…TLFF).

The protein localises to the membrane. This is an uncharacterized protein from Acanthamoeba polyphaga mimivirus (APMV).